Reading from the N-terminus, the 392-residue chain is MKKAYYGDFGGQFLPESAMFALNELENAFLKFSKDKFFKKELSELLKTYVGRPTPLYFARNLSKKYQHEIYLKREDLNHTGAHKINNAIAQALLAKKMGKKKIIAETGAGQHGLATATAAALLGLECEIYMGATDVQRQALNVYKMELLGAKIHAVQSGLKTLKEATTAAIQAWVGDIKNIFYVVGSAVGPYPYPKMVTHFQSIIGKECKMQLQKLNKKVDYIIAAVGGGSNAAGIFYDFIKDENVKLIGIEAGGLGVDTLYHAATLNKGETGIIHGMKTKVLQDDLGNILPVHSVSAGLDYPGIGPLHAFLFESKRAQYHAISDEECMQALKLLCKEEGIIAAIESSHALAFLEKLCPTLKKKSVIVINLSGRGDKDMQMIREYKKGVIYG.

At Lys84 the chain carries N6-(pyridoxal phosphate)lysine.

Belongs to the TrpB family. In terms of assembly, tetramer of two alpha and two beta chains. Pyridoxal 5'-phosphate serves as cofactor.

The enzyme catalyses (1S,2R)-1-C-(indol-3-yl)glycerol 3-phosphate + L-serine = D-glyceraldehyde 3-phosphate + L-tryptophan + H2O. It participates in amino-acid biosynthesis; L-tryptophan biosynthesis; L-tryptophan from chorismate: step 5/5. Its function is as follows. The beta subunit is responsible for the synthesis of L-tryptophan from indole and L-serine. The chain is Tryptophan synthase beta chain from Campylobacter jejuni subsp. doylei (strain ATCC BAA-1458 / RM4099 / 269.97).